The primary structure comprises 729 residues: Fatty acid oxidation complex subunit alpha (729 aa).

The tract at residues 1–189 (MLYQSETLQL…KIGLVDAVVD (189 aa)) is enoyl-CoA hydratase/isomerase. Asp-296 is a substrate binding site. Positions 311 to 729 (AAPKLAAVLG…LLDVSTNQPA (419 aa)) are 3-hydroxyacyl-CoA dehydrogenase. NAD(+) contacts are provided by residues Met-324, Asp-343, 400 to 402 (VVE), Lys-407, and Ser-429. The active-site For 3-hydroxyacyl-CoA dehydrogenase activity is the His-450. Asn-453 is a binding site for NAD(+). 2 residues coordinate substrate: Asn-500 and Tyr-660.

In the N-terminal section; belongs to the enoyl-CoA hydratase/isomerase family. This sequence in the C-terminal section; belongs to the 3-hydroxyacyl-CoA dehydrogenase family. Heterotetramer of two alpha chains (FadB) and two beta chains (FadA).

It catalyses the reaction a (3S)-3-hydroxyacyl-CoA + NAD(+) = a 3-oxoacyl-CoA + NADH + H(+). The enzyme catalyses a (3S)-3-hydroxyacyl-CoA = a (2E)-enoyl-CoA + H2O. The catalysed reaction is a 4-saturated-(3S)-3-hydroxyacyl-CoA = a (3E)-enoyl-CoA + H2O. It carries out the reaction (3S)-3-hydroxybutanoyl-CoA = (3R)-3-hydroxybutanoyl-CoA. It catalyses the reaction a (3Z)-enoyl-CoA = a 4-saturated (2E)-enoyl-CoA. The enzyme catalyses a (3E)-enoyl-CoA = a 4-saturated (2E)-enoyl-CoA. Its pathway is lipid metabolism; fatty acid beta-oxidation. Involved in the aerobic and anaerobic degradation of long-chain fatty acids via beta-oxidation cycle. Catalyzes the formation of 3-oxoacyl-CoA from enoyl-CoA via L-3-hydroxyacyl-CoA. It can also use D-3-hydroxyacyl-CoA and cis-3-enoyl-CoA as substrate. The protein is Fatty acid oxidation complex subunit alpha of Yersinia pseudotuberculosis serotype O:1b (strain IP 31758).